A 309-amino-acid polypeptide reads, in one-letter code: Sulfate adenylyltransferase subunit 2 (309 aa).

Belongs to the PAPS reductase family. CysD subfamily. In terms of assembly, heterodimer composed of CysD, the smaller subunit, and CysN.

It catalyses the reaction sulfate + ATP + H(+) = adenosine 5'-phosphosulfate + diphosphate. It functions in the pathway sulfur metabolism; hydrogen sulfide biosynthesis; sulfite from sulfate: step 1/3. Functionally, with CysN forms the ATP sulfurylase (ATPS) that catalyzes the adenylation of sulfate producing adenosine 5'-phosphosulfate (APS) and diphosphate, the first enzymatic step in sulfur assimilation pathway. APS synthesis involves the formation of a high-energy phosphoric-sulfuric acid anhydride bond driven by GTP hydrolysis by CysN coupled to ATP hydrolysis by CysD. This chain is Sulfate adenylyltransferase subunit 2, found in Mycobacterium sp. (strain KMS).